A 590-amino-acid polypeptide reads, in one-letter code: Acetolactate synthase large subunit (590 aa).

Residue glutamate 61 coordinates thiamine diphosphate. FAD-binding positions include arginine 163, histidine 271 to arginine 292, and aspartate 314 to aspartate 333. Residues glutamine 405–tryptophan 484 form a thiamine pyrophosphate binding region. 2 residues coordinate Mg(2+): aspartate 455 and asparagine 482.

The protein belongs to the TPP enzyme family. Dimer of large and small chains. Mg(2+) is required as a cofactor. It depends on thiamine diphosphate as a cofactor.

It localises to the plastid. The protein localises to the chloroplast. The enzyme catalyses 2 pyruvate + H(+) = (2S)-2-acetolactate + CO2. It participates in amino-acid biosynthesis; L-isoleucine biosynthesis; L-isoleucine from 2-oxobutanoate: step 1/4. It functions in the pathway amino-acid biosynthesis; L-valine biosynthesis; L-valine from pyruvate: step 1/4. This Pyropia yezoensis (Susabi-nori) protein is Acetolactate synthase large subunit (ilvB).